A 240-amino-acid polypeptide reads, in one-letter code: tRNA1(Val) (adenine(37)-N6)-methyltransferase (240 aa).

This sequence belongs to the methyltransferase superfamily. tRNA (adenine-N(6)-)-methyltransferase family.

Its subcellular location is the cytoplasm. The catalysed reaction is adenosine(37) in tRNA1(Val) + S-adenosyl-L-methionine = N(6)-methyladenosine(37) in tRNA1(Val) + S-adenosyl-L-homocysteine + H(+). In terms of biological role, specifically methylates the adenine in position 37 of tRNA(1)(Val) (anticodon cmo5UAC). In Christiangramia forsetii (strain DSM 17595 / CGMCC 1.15422 / KT0803) (Gramella forsetii), this protein is tRNA1(Val) (adenine(37)-N6)-methyltransferase.